The primary structure comprises 559 residues: Urocanate hydratase (559 aa).

NAD(+)-binding positions include 50-51 (GG), Q128, 174-176 (GMG), D194, R199, 240-241 (NA), 261-265 (QTSAH), 271-272 (YI), and Y320. Residue C408 is part of the active site. Residue G490 participates in NAD(+) binding.

This sequence belongs to the urocanase family. NAD(+) serves as cofactor.

Its subcellular location is the cytoplasm. The catalysed reaction is 4-imidazolone-5-propanoate = trans-urocanate + H2O. The protein operates within amino-acid degradation; L-histidine degradation into L-glutamate; N-formimidoyl-L-glutamate from L-histidine: step 2/3. Functionally, catalyzes the conversion of urocanate to 4-imidazolone-5-propionate. This chain is Urocanate hydratase, found in Halalkalibacterium halodurans (strain ATCC BAA-125 / DSM 18197 / FERM 7344 / JCM 9153 / C-125) (Bacillus halodurans).